We begin with the raw amino-acid sequence, 940 residues long: Isoleucine--tRNA ligase (940 aa).

The 'HIGH' region signature appears at 58 to 68 (PYANGSIHIGH). Glutamate 564 serves as a coordination point for L-isoleucyl-5'-AMP. Positions 605–609 (KMSKS) match the 'KMSKS' region motif. Lysine 608 contributes to the ATP binding site. Residues cysteine 903, cysteine 906, cysteine 923, and cysteine 926 each coordinate Zn(2+).

The protein belongs to the class-I aminoacyl-tRNA synthetase family. IleS type 1 subfamily. In terms of assembly, monomer. Zn(2+) is required as a cofactor.

It is found in the cytoplasm. The enzyme catalyses tRNA(Ile) + L-isoleucine + ATP = L-isoleucyl-tRNA(Ile) + AMP + diphosphate. Functionally, catalyzes the attachment of isoleucine to tRNA(Ile). As IleRS can inadvertently accommodate and process structurally similar amino acids such as valine, to avoid such errors it has two additional distinct tRNA(Ile)-dependent editing activities. One activity is designated as 'pretransfer' editing and involves the hydrolysis of activated Val-AMP. The other activity is designated 'posttransfer' editing and involves deacylation of mischarged Val-tRNA(Ile). This is Isoleucine--tRNA ligase from Shewanella oneidensis (strain ATCC 700550 / JCM 31522 / CIP 106686 / LMG 19005 / NCIMB 14063 / MR-1).